The chain runs to 527 residues: Succinate-semialdehyde dehydrogenase, mitochondrial (527 aa).

The transit peptide at 1–35 directs the protein to the mitochondrion; the sequence is MAMAMAMRRAAALGARHILAASSTSSSGVLLRRHM. NAD(+) is bound by residues Arg208, 223–226, and 276–281; these read KPSE and GSTAVG. Arg208 is a binding site for substrate. Glu298 (proton acceptor) is an active-site residue. Residues Arg326, Cys332, and Ser489 each contribute to the substrate site. Residue Cys332 is the Nucleophile of the active site. Cys332 and Cys334 are joined by a disulfide.

This sequence belongs to the aldehyde dehydrogenase family. As to quaternary structure, homotetramer.

Its subcellular location is the mitochondrion matrix. The enzyme catalyses succinate semialdehyde + NAD(+) + H2O = succinate + NADH + 2 H(+). It participates in amino-acid degradation; 4-aminobutanoate degradation. Redox-regulated. Inhibited under oxydizing conditions. Functionally, oxidizes specifically succinate semialdehyde. Involved in plant response to environmental stress by preventing the accumulation of reactive oxygen species. The chain is Succinate-semialdehyde dehydrogenase, mitochondrial (ALDH5F1) from Oryza sativa subsp. japonica (Rice).